The primary structure comprises 127 residues: Holo-[acyl-carrier-protein] synthase (127 aa).

Mg(2+) is bound by residues Asp9 and Glu58.

It belongs to the P-Pant transferase superfamily. AcpS family. It depends on Mg(2+) as a cofactor.

It is found in the cytoplasm. It carries out the reaction apo-[ACP] + CoA = holo-[ACP] + adenosine 3',5'-bisphosphate + H(+). Transfers the 4'-phosphopantetheine moiety from coenzyme A to a Ser of acyl-carrier-protein. In Shewanella sp. (strain MR-4), this protein is Holo-[acyl-carrier-protein] synthase.